A 460-amino-acid chain; its full sequence is MAWNTNLRWRLPLTCLLLQVIMVILFGVFVRYDPDADAHWIDERLGRNISSDMDNEFYYRYPSFQDVHVMIFVGFGFLMTFLQRYGFSSVGFNFLLAAFGIQWALLMQGWLHSFHSGYIVLGVENLINADFCVGSVCVAFGAVLGKVSPVQLLIMTLFQVTLFSVNEFILLNLLEVKDAGGSMTIHTFGAYFGLTVTWILYRPNLYQSKERQSSVYHSDLFAMIGTLFLWMYWPSFNSAVSHHGDAQHRAAINTYCSLAACVLTSVALSSALHKKGKLDMVHIQNATLAGGVAVGTAAEMMLMPYGSLIVGFICGIISTLGFVYLTPFLESRLRIQDTCGIHNLHGMPGIIGGIVGAVTAASANTQQYGQKGLAHAFDIDATKTTWTASMQGSFQAAGLFVSLAMALVGGLIVGVILKLPFWGQPADENCFEDAIYWEIPEDQKSLVSRSEDPTLRPTEP.

The Cytoplasmic portion of the chain corresponds to 1-9 (MAWNTNLRW). Residues 10 to 30 (RLPLTCLLLQVIMVILFGVFV) traverse the membrane as a helical segment. Over 31 to 61 (RYDPDADAHWIDERLGRNISSDMDNEFYYRY) the chain is Extracellular. A glycan (N-linked (GlcNAc...) asparagine) is linked at N48. A helical membrane pass occupies residues 62–82 (PSFQDVHVMIFVGFGFLMTFL). The Cytoplasmic segment spans residues 83–86 (QRYG). A helical transmembrane segment spans residues 87–107 (FSSVGFNFLLAAFGIQWALLM). Over 108 to 125 (QGWLHSFHSGYIVLGVEN) the chain is Extracellular. Residues 126–145 (LINADFCVGSVCVAFGAVLG) form a helical membrane-spanning segment. The Cytoplasmic portion of the chain corresponds to 146-151 (KVSPVQ). A helical membrane pass occupies residues 152–174 (LLIMTLFQVTLFSVNEFILLNLL). The Extracellular segment spans residues 175–179 (EVKDA). A helical membrane pass occupies residues 180-200 (GGSMTIHTFGAYFGLTVTWIL). The Cytoplasmic portion of the chain corresponds to 201 to 219 (YRPNLYQSKERQSSVYHSD). Residues 220–240 (LFAMIGTLFLWMYWPSFNSAV) form a helical membrane-spanning segment. Over 241–251 (SHHGDAQHRAA) the chain is Extracellular. The chain crosses the membrane as a helical span at residues 252–272 (INTYCSLAACVLTSVALSSAL). Topologically, residues 273 to 285 (HKKGKLDMVHIQN) are cytoplasmic. A helical membrane pass occupies residues 286–306 (ATLAGGVAVGTAAEMMLMPYG). Residue S307 is a topological domain, extracellular. Residues 308–328 (LIVGFICGIISTLGFVYLTPF) form a helical membrane-spanning segment. The Cytoplasmic segment spans residues 329–340 (LESRLRIQDTCG). The helical transmembrane segment at 341 to 361 (IHNLHGMPGIIGGIVGAVTAA) threads the bilayer. Residues 362-396 (SANTQQYGQKGLAHAFDIDATKTTWTASMQGSFQA) lie on the Extracellular side of the membrane. The helical transmembrane segment at 397–417 (AGLFVSLAMALVGGLIVGVIL) threads the bilayer. The Cytoplasmic segment spans residues 418 to 460 (KLPFWGQPADENCFEDAIYWEIPEDQKSLVSRSEDPTLRPTEP).

Belongs to the ammonium transporter (TC 2.A.49) family. Rh subfamily. Homotrimer. N-glycosylated.

The protein resides in the cell membrane. The protein localises to the apical cell membrane. It catalyses the reaction NH4(+)(in) = NH4(+)(out). The catalysed reaction is methylamine(out) = methylamine(in). The enzyme catalyses CO2(out) = CO2(in). In terms of biological role, ammonium transporter involved in the maintenance of acid-base homeostasis. Transports ammonium and its related derivative methylammonium across the plasma membrane of epithelial cells likely contributing to renal transepithelial ammonia transport and ammonia metabolism. Postulated to primarily mediate an electroneutral bidirectional transport of NH3 ammonia species according to a mechanism that implies interaction of an NH4(+) ion with acidic residues of the pore entry followed by dissociation of NH4(+) into NH3 and H(+). As a result NH3 transits through the central pore and is protonated on the extracellular side reforming NH4(+). May act as a CO2 channel providing for renal acid secretion. This chain is Ammonium transporter Rh type C (RHCG), found in Sus scrofa (Pig).